Reading from the N-terminus, the 131-residue chain is Large ribosomal subunit protein bL17 (131 aa).

The protein belongs to the bacterial ribosomal protein bL17 family. In terms of assembly, part of the 50S ribosomal subunit. Contacts protein L32.

This is Large ribosomal subunit protein bL17 from Sodalis glossinidius (strain morsitans).